Reading from the N-terminus, the 78-residue chain is Beta-defensin 12 (78 aa).

Residues 1–27 (MALSREVFYFGFALFFIVVELPSGSWA) form the signal peptide. Cystine bridges form between Cys-46–Cys-73, Cys-53–Cys-67, and Cys-57–Cys-74.

The protein belongs to the beta-defensin family. Only expressed in epididymis (caput, corpus and cauda).

Its subcellular location is the secreted. Its function is as follows. Has antibacterial activity. The polypeptide is Beta-defensin 12 (Defb12) (Mus musculus (Mouse)).